Reading from the N-terminus, the 193-residue chain is Pyridoxal 5'-phosphate synthase subunit PdxT (193 aa).

48-50 is a binding site for L-glutamine; that stretch reads GES. The active-site Nucleophile is the cysteine 80. L-glutamine is bound by residues arginine 109 and 137-138; that span reads IR. Catalysis depends on charge relay system residues histidine 173 and glutamate 175.

It belongs to the glutaminase PdxT/SNO family. In the presence of PdxS, forms a dodecamer of heterodimers. Only shows activity in the heterodimer.

It carries out the reaction aldehydo-D-ribose 5-phosphate + D-glyceraldehyde 3-phosphate + L-glutamine = pyridoxal 5'-phosphate + L-glutamate + phosphate + 3 H2O + H(+). It catalyses the reaction L-glutamine + H2O = L-glutamate + NH4(+). The protein operates within cofactor biosynthesis; pyridoxal 5'-phosphate biosynthesis. Its function is as follows. Catalyzes the hydrolysis of glutamine to glutamate and ammonia as part of the biosynthesis of pyridoxal 5'-phosphate. The resulting ammonia molecule is channeled to the active site of PdxS. The protein is Pyridoxal 5'-phosphate synthase subunit PdxT of Mycobacteroides abscessus (strain ATCC 19977 / DSM 44196 / CCUG 20993 / CIP 104536 / JCM 13569 / NCTC 13031 / TMC 1543 / L948) (Mycobacterium abscessus).